The sequence spans 242 residues: Ribosomal RNA small subunit methyltransferase G (242 aa).

Residues Gly-78, Leu-83, 130-131, and Arg-151 each bind S-adenosyl-L-methionine; that span reads AE.

The protein belongs to the methyltransferase superfamily. RNA methyltransferase RsmG family.

Its subcellular location is the cytoplasm. In terms of biological role, specifically methylates the N7 position of guanine in position 518 of 16S rRNA. The sequence is that of Ribosomal RNA small subunit methyltransferase G from Salinispora arenicola (strain CNS-205).